Here is a 539-residue protein sequence, read N- to C-terminus: Tyrosine-protein kinase csk-1 (539 aa).

The SH3 domain maps to 43-110; the sequence is SPGNDVIVTR…HADCVVRING (68 aa). The disordered stretch occupies residues 129 to 148; that stretch reads PGAASTTSSTSSHHSTAANH. Residues 131–146 show a composition bias toward low complexity; it reads AASTTSSTSSHHSTAA. Residues 151–241 enclose the SH2 domain; sequence WFHSMISREN…GLCHRLVTPI (91 aa). The Protein kinase domain maps to 283 to 535; that stretch reads IDVGDTIGHG…GQVLQRLTTI (253 aa). ATP is bound by residues 289 to 297 and lysine 310; that span reads IGHGEFGDV. Aspartate 403 acts as the Proton acceptor in catalysis.

This sequence belongs to the protein kinase superfamily. Tyr protein kinase family. CSK subfamily. Mg(2+) serves as cofactor. It depends on Mn(2+) as a cofactor. Expressed predominantly in pharyngeal muscles in procorpus, metacorpus and terminal bulb. Expressed also in some neurons (ASE, ADF, AVA, AUA, RMDV and BAG) in the head region, anchor cell, vulva, cells around anus, body wall muscle and gondal distal tip cells.

The catalysed reaction is L-tyrosyl-[protein] + ATP = O-phospho-L-tyrosyl-[protein] + ADP + H(+). Non-receptor tyrosine-protein kinase which plays a role in pharynx function by regulating pumping and the orientation of pharyngeal muscle fibers, independently of src-1 and src-2. May phosphorylate and thereby negatively regulate src-1 and src-2 activities. The polypeptide is Tyrosine-protein kinase csk-1 (Caenorhabditis elegans).